The primary structure comprises 153 residues: Mediator of RNA polymerase II transcription subunit 22 (153 aa).

It belongs to the Mediator complex subunit 22 family. Component of the Mediator complex.

It is found in the nucleus. Component of the Mediator complex, a coactivator involved in the regulated transcription of nearly all RNA polymerase II-dependent genes. Mediator functions as a bridge to convey information from gene-specific regulatory proteins to the basal RNA polymerase II transcription machinery. Mediator is recruited to promoters by direct interactions with regulatory proteins and serves as a scaffold for the assembly of a functional preinitiation complex with RNA polymerase II and the general transcription factors. In Caenorhabditis briggsae, this protein is Mediator of RNA polymerase II transcription subunit 22 (mdt-22).